The primary structure comprises 219 residues: Probable transcription factor At1g55950 (219 aa).

The segment at 9–77 (ASHSLKSLMA…DEKMETEEEG (69 aa)) is disordered. Basic residues predominate over residues 17–30 (MAKKNKRSQQKNKC). Positions 31 to 48 (LKPEKDPSTVKRLLEDPP) are enriched in basic and acidic residues. Residues 65 to 77 (YGDDEKMETEEEG) show a composition bias toward acidic residues.

The protein belongs to the GeBP family.

The chain is Probable transcription factor At1g55950 from Arabidopsis thaliana (Mouse-ear cress).